The sequence spans 1084 residues: Probable hemoglobin and hemoglobin-haptoglobin-binding protein 3 (1084 aa).

Positions 1 to 24 (MTNFKFSLLACSIAFALNASTVYA) are cleaved as a signal peptide. 12 consecutive repeat copies span residues 26–29 (QPTN), 30–33 (QPTN), 34–37 (QPTN), 38–41 (QPTN), 42–45 (QPTN), 46–49 (QPTN), 50–53 (QPTN), 54–57 (QPTN), 58–61 (QPTN), 62–65 (QPTN), 66–69 (QPTN), and 70–73 (QPTN). The segment at 26–73 (QPTNQPTNQPTNQPTNQPTNQPTNQPTNQPTNQPTNQPTNQPTNQPTN) is 12 X 4 AA tandem repeats of Q-P-T-N. The segment covering 26-75 (QPTNQPTNQPTNQPTNQPTNQPTNQPTNQPTNQPTNQPTNQPTNQPTNQN) has biased composition (low complexity). The segment at 26-77 (QPTNQPTNQPTNQPTNQPTNQPTNQPTNQPTNQPTNQPTNQPTNQPTNQNSN) is disordered. The TonB box motif lies at 83 to 90 (EQINVSGS). Residues 95-220 (NIKEKKVGET…LGGSVIFETK (126 aa)) enclose the TBDR plug domain. Residues 228–1084 (DKDYYLSYKR…NYRMSVQFEF (857 aa)) form the TBDR beta-barrel domain. Positions 1067-1084 (NRFYAPGRNYRMSVQFEF) match the TonB C-terminal box motif.

Belongs to the TonB-dependent receptor family. Hemoglobin/haptoglobin binding protein subfamily.

The protein localises to the cell outer membrane. Its function is as follows. Acts as a receptor for hemoglobin or the hemoglobin/haptoglobin complex of the human host and is required for heme uptake. This is Probable hemoglobin and hemoglobin-haptoglobin-binding protein 3 from Haemophilus influenzae (strain ATCC 51907 / DSM 11121 / KW20 / Rd).